A 492-amino-acid polypeptide reads, in one-letter code: Fibroblast growth factor receptor substrate 3 (492 aa).

Gly-2 carries the N-myristoyl glycine lipid modification. The IRS-type PTB domain maps to 13–115 (VPHNHPTKFK…QCNSINVTEE (103 aa)). Disordered stretches follow at residues 125–205 (PQEL…EDRR), 337–413 (QQLR…EPPR), and 425–492 (WGTA…DLPL). 2 stretches are compositionally biased toward polar residues: residues 133-147 (GSSQPTGYTVSSFSN) and 166-185 (PSTSSLRHPSPGEESTQTLI). The span at 374–385 (TSTRASARSHSS) shows a compositional bias: low complexity.

In terms of assembly, binds NTRK1, FGFR1, NGFR, GRB2, PTPN11 and ERK2. Phosphorylated on tyrosine residues upon stimulation by BFGF or NGFB.

The protein localises to the membrane. Functionally, adapter protein that links FGF and NGF receptors to downstream signaling pathways. Involved in the activation of MAP kinases. Down-regulates ERK2 signaling by interfering with the phosphorylation and nuclear translocation of ERK2. The sequence is that of Fibroblast growth factor receptor substrate 3 (Frs3) from Rattus norvegicus (Rat).